A 65-amino-acid polypeptide reads, in one-letter code: Conotoxin Cal1.3 (65 aa).

The signal sequence occupies residues 1 to 18 (MRCLPVFIILLLLASTAA). The propeptide occupies 19–49 (VDVAGSKLKRRLERKPYQGSQAYVKKTAFGL). 2 cysteine pairs are disulfide-bonded: Cys-52–Cys-62 and Cys-53–Cys-59. A 4-hydroxyproline modification is found at Pro-61. Cys-62 is modified (cysteine amide).

This sequence belongs to the conotoxin T superfamily. As to expression, expressed by the venom duct.

It is found in the secreted. Probable neurotoxin with unknown target. Possibly targets ion channels. This chain is Conotoxin Cal1.3, found in Californiconus californicus (California cone).